A 478-amino-acid polypeptide reads, in one-letter code: 3-isopropylmalate dehydratase large subunit (478 aa).

The [4Fe-4S] cluster site is built by Cys359, Cys417, and Cys420.

Belongs to the aconitase/IPM isomerase family. LeuC type 1 subfamily. As to quaternary structure, heterodimer of LeuC and LeuD. The cofactor is [4Fe-4S] cluster.

It carries out the reaction (2R,3S)-3-isopropylmalate = (2S)-2-isopropylmalate. The protein operates within amino-acid biosynthesis; L-leucine biosynthesis; L-leucine from 3-methyl-2-oxobutanoate: step 2/4. Catalyzes the isomerization between 2-isopropylmalate and 3-isopropylmalate, via the formation of 2-isopropylmaleate. The polypeptide is 3-isopropylmalate dehydratase large subunit (Anaeromyxobacter sp. (strain Fw109-5)).